An 899-amino-acid polypeptide reads, in one-letter code: Inositol 1,4,5-triphosphate receptor associated 1 (899 aa).

Disordered stretches follow at residues 32 to 110 (PGTH…HRHL), 164 to 286 (RRGR…PLQH), 324 to 391 (KTAR…EEPG), and 463 to 486 (AAEQ…SKSG). Residues 100–110 (SPHRRLSHRHL) are compositionally biased toward basic residues. Phosphoserine is present on S106. The segment at 140–172 (SEEDKKKNLALLEEAKLVSERFLTRRGRKSRSS) is interaction with PRKG1. Residues 171–180 (SSLGDSPSAV) are compositionally biased toward polar residues. The segment covering 181 to 203 (SPNLSSGASPASSRSCSLTISTS) has biased composition (low complexity). Residues 266 to 281 (TVEKTKELTVEQKENF) are compositionally biased toward basic and acidic residues. Positions 333-351 (PRTTAQGSGGTVSPHSLGQ) are enriched in polar residues. The residue at position 382 (S382) is a Phosphoserine. An interaction with ITPR1 region spans residues 521-567 (NVFVQLSLAFRNDSYTLESRINQAERERNLTEENTEKELENFKASIT). Positions 534–632 (SYTLESRINQ…MQYVENLKRT (99 aa)) form a coiled coil. Phosphoserine is present on residues S670 and S683. 2 disordered regions span residues 695 to 722 (LPGQ…SSIS) and 757 to 818 (TSQE…DQGS). The span at 699 to 715 (APSSSPMPSLPALSESS) shows a compositional bias: low complexity. Composition is skewed to basic and acidic residues over residues 759-770 (QETKAKAEEEAY) and 777-787 (GVKKTEELQDL). Acidic residues predominate over residues 788–814 (KEEEEEEQKTESPEEPEEVEETQEDEK). A helical transmembrane segment spans residues 839-859 (WQVIWMMAAVMLVLSVVLGLY). Positions 867–899 (EEADGPPGRSTCSAAQRDSWWSSGLQQELPAEQ) are disordered. Polar residues predominate over residues 876 to 892 (STCSAAQRDSWWSSGLQ).

In terms of assembly, part of cGMP kinase signaling complex at least composed of ACTA2/alpha-actin, CNN1/calponin H1, PLN/phospholamban, PRKG1 and ITPR1. Interacts with PRKG1/cGKI-beta and ITPR1/IP3R type I. Interacts with HCN4; regulates HCN4 channel activity. In terms of processing, phosphorylated by PRKG1/cGKI. As to expression, highly expressed in smooth muscle such as aorta, colon and uterus. Detected in the brain, in the thalamus, in the hippocampus and myenteric plexus. Highly expressed in megakaryocytes. Down-regulated during macrophage differentiation.

Its subcellular location is the membrane. The protein localises to the cytoplasm. It localises to the perinuclear region. The protein resides in the sarcoplasmic reticulum. In terms of biological role, plays a role as NO/PRKG1-dependent regulator of IP3-induced calcium release; its phosphorylation by PRKG1 inhibits bradykinin and IP3-induced calcium release from intracellular stores. Recruits PRKG1 to the endoplasmic reticulum and may mediate the assembly of PRKG1 and ITPR1 in a macrocomplex. Involved in PRKG1 signaling cascade leading to inhibition of platelet activation and aggregation. Also mediates NO-dependent inhibition of calcium signaling in gastrointestinal smooth muscle contributing to NO-dependent relaxation. Plays a role in the regulation of cellular excitability by regulating the hyperpolarization-activated cyclic nucleotide-gated HCN4 channel activity. The chain is Inositol 1,4,5-triphosphate receptor associated 1 (Irag1) from Mus musculus (Mouse).